The following is a 257-amino-acid chain: MSRFFLRNAFMFVVYAYLYIPIIILVTNSFNKDRYGLSWKGFSWNWYERLFNNDTLIQAAIHSVTIAFFAATLATIVGGLTAIALYRYRFRGKQAVSGMLFIVMMSPDIVMAVSLLALFMVVGISLGFWSLLLAHVTFCLPYVTVTIFSRLNGFDSRMLEAAKDLGASEVTILRKIILPLALPAVVSGWLLSFTISLDDVVVSSFVSGVSYEILPLRIFSLVKTGVTPEVNALATIMIVLSLALVVLSQLITRKNNH.

The Cytoplasmic segment spans residues 1-7 (MSRFFLR). Residues 8–27 (NAFMFVVYAYLYIPIIILVT) form a helical membrane-spanning segment. Residues 28-65 (NSFNKDRYGLSWKGFSWNWYERLFNNDTLIQAAIHSVT) are Periplasmic-facing. Residues 60 to 248 (AIHSVTIAFF…VLSLALVVLS (189 aa)) enclose the ABC transmembrane type-1 domain. The chain crosses the membrane as a helical span at residues 66 to 85 (IAFFAATLATIVGGLTAIAL). At 86–100 (YRYRFRGKQAVSGML) the chain is on the cytoplasmic side. The helical transmembrane segment at 101 to 120 (FIVMMSPDIVMAVSLLALFM) threads the bilayer. At 121 to 128 (VVGISLGF) the chain is on the periplasmic side. The chain crosses the membrane as a helical span at residues 129 to 148 (WSLLLAHVTFCLPYVTVTIF). The Cytoplasmic portion of the chain corresponds to 149-176 (SRLNGFDSRMLEAAKDLGASEVTILRKI). The chain crosses the membrane as a helical span at residues 177–196 (ILPLALPAVVSGWLLSFTIS). Over 197–231 (LDDVVVSSFVSGVSYEILPLRIFSLVKTGVTPEVN) the chain is Periplasmic. Residues 232–251 (ALATIMIVLSLALVVLSQLI) traverse the membrane as a helical segment. Residues 252 to 257 (TRKNNH) are Cytoplasmic-facing.

This sequence belongs to the binding-protein-dependent transport system permease family. CysTW subfamily.

The protein localises to the cell inner membrane. Its function is as follows. Required for the activity of the bacterial periplasmic transport system of putrescine and spermidine. This chain is Spermidine/putrescine transport system permease protein PotC (potC), found in Haemophilus influenzae (strain ATCC 51907 / DSM 11121 / KW20 / Rd).